A 305-amino-acid chain; its full sequence is Dihydroorotate dehydrogenase A (fumarate) (305 aa).

Residues serine 21 and 45-46 (KS) contribute to the FMN site. Substrate-binding positions include lysine 45, 69–73 (NAIGL), and asparagine 129. Asparagine 129 provides a ligand contact to FMN. The active-site Nucleophile is the cysteine 132. The FMN site is built by lysine 167 and isoleucine 193. 194 to 195 (NT) provides a ligand contact to substrate. Residues glycine 219 and 245–246 (GG) contribute to the FMN site.

The protein belongs to the dihydroorotate dehydrogenase family. Type 1 subfamily. In terms of assembly, homodimer. Requires FMN as cofactor.

The protein resides in the cytoplasm. It carries out the reaction (S)-dihydroorotate + fumarate = orotate + succinate. It participates in pyrimidine metabolism; UMP biosynthesis via de novo pathway. Catalyzes the conversion of dihydroorotate to orotate with fumarate as the electron acceptor. The chain is Dihydroorotate dehydrogenase A (fumarate) (pyrD) from Lactiplantibacillus plantarum (strain ATCC BAA-793 / NCIMB 8826 / WCFS1) (Lactobacillus plantarum).